The sequence spans 382 residues: Opsin-VA (382 aa).

Topologically, residues 1-35 (MELFPVAVNGVSHAEDPFSGPLTFIAPWNYKVLAT) are extracellular. The helical transmembrane segment at 36–56 (LMFVVTAASLSENFAVMLVTF) threads the bilayer. Residues 57 to 67 (RFTQLRKPLNY) lie on the Cytoplasmic side of the membrane. The helical transmembrane segment at 68–88 (IIVNLSLADFLVSLTGGTISF) threads the bilayer. Over 89–103 (LTNYHGYFFLGKWAC) the chain is Extracellular. Cys103 and Cys180 form a disulfide bridge. A helical membrane pass occupies residues 104-124 (VLEGFAVTYFGIVALWSLAVL). The Cytoplasmic segment spans residues 125 to 147 (AFERFFVICRPLGNIRLRGKHAA). A helical membrane pass occupies residues 148 to 168 (LGLLFVWTFSFIWTIPPVLGW). Over 169-193 (SSYTVSKIGTTCEPNWYSGNFHDHT) the chain is Extracellular. Residues 194–214 (FIIAFFITCFILPLGVIVVCY) traverse the membrane as a helical segment. Residues 215-244 (CKLIKKLRKVSNTHGRLGNARKPERQVTRM) are Cytoplasmic-facing. Residues 245-265 (VVVMIVAFMVAWTPYAAFSIV) form a helical membrane-spanning segment. At 266-279 (VTAHPSIHLDPRLA) the chain is on the extracellular side. Residues 280-300 (AAPAFFSKTAAVYNPVIYVFM) traverse the membrane as a helical segment. The residue at position 287 (Lys287) is an N6-(retinylidene)lysine. Over 301-382 (NKQFRKCLVQ…PIPENKVCPM (82 aa)) the chain is Cytoplasmic. Residues 330-346 (RQGMTNESHTGEMSTIA) show a composition bias toward polar residues. The interval 330-371 (RQGMTNESHTGEMSTIASRIPKDGSIPEKTQEHPGERRSLAH) is disordered. Basic and acidic residues predominate over residues 349-368 (IPKDGSIPEKTQEHPGERRS).

It belongs to the G-protein coupled receptor 1 family. Opsin subfamily. In terms of tissue distribution, expressed in a subset of retinal horizontal cells as well as in retinal ganglion cells.

The protein resides in the membrane. The sequence is that of Opsin-VA from Rutilus rutilus (Roach).